A 422-amino-acid polypeptide reads, in one-letter code: UDP-N-acetylglucosamine 1-carboxyvinyltransferase (422 aa).

K22–N23 provides a ligand contact to phosphoenolpyruvate. R93 serves as a coordination point for UDP-N-acetyl-alpha-D-glucosamine. The active-site Proton donor is the C117. At C117 the chain carries 2-(S-cysteinyl)pyruvic acid O-phosphothioketal. UDP-N-acetyl-alpha-D-glucosamine contacts are provided by residues R122–L126, D308, and I330.

This sequence belongs to the EPSP synthase family. MurA subfamily.

The protein localises to the cytoplasm. It catalyses the reaction phosphoenolpyruvate + UDP-N-acetyl-alpha-D-glucosamine = UDP-N-acetyl-3-O-(1-carboxyvinyl)-alpha-D-glucosamine + phosphate. The protein operates within cell wall biogenesis; peptidoglycan biosynthesis. Cell wall formation. Adds enolpyruvyl to UDP-N-acetylglucosamine. The sequence is that of UDP-N-acetylglucosamine 1-carboxyvinyltransferase from Legionella pneumophila (strain Paris).